The chain runs to 434 residues: UDP-N-acetylglucosamine 1-carboxyvinyltransferase (434 aa).

Position 22-23 (22-23 (KN)) interacts with phosphoenolpyruvate. UDP-N-acetyl-alpha-D-glucosamine is bound at residue arginine 97. Catalysis depends on aspartate 121, which acts as the Proton donor. UDP-N-acetyl-alpha-D-glucosamine is bound by residues aspartate 319 and methionine 341.

The protein belongs to the EPSP synthase family. MurA subfamily.

Its subcellular location is the cytoplasm. It catalyses the reaction phosphoenolpyruvate + UDP-N-acetyl-alpha-D-glucosamine = UDP-N-acetyl-3-O-(1-carboxyvinyl)-alpha-D-glucosamine + phosphate. The protein operates within cell wall biogenesis; peptidoglycan biosynthesis. Cell wall formation. Adds enolpyruvyl to UDP-N-acetylglucosamine. This is UDP-N-acetylglucosamine 1-carboxyvinyltransferase from Bacteroides fragilis (strain ATCC 25285 / DSM 2151 / CCUG 4856 / JCM 11019 / LMG 10263 / NCTC 9343 / Onslow / VPI 2553 / EN-2).